The chain runs to 327 residues: Malate dehydrogenase (327 aa).

Residue 12-18 (GAAGQIA) coordinates NAD(+). R93 and R99 together coordinate substrate. Residues N106, Q113, and 130–132 (VGN) each bind NAD(+). Positions 132 and 163 each coordinate substrate. H188 serves as the catalytic Proton acceptor.

It belongs to the LDH/MDH superfamily. MDH type 2 family.

It catalyses the reaction (S)-malate + NAD(+) = oxaloacetate + NADH + H(+). Its function is as follows. Catalyzes the reversible oxidation of malate to oxaloacetate. This chain is Malate dehydrogenase, found in Acidiphilium cryptum (strain JF-5).